Here is an 81-residue protein sequence, read N- to C-terminus: Carboxysome shell vertex protein CsoS4B (81 aa).

A BMV domain is found at 1-77; it reads MEVMRVRSDL…TDLTIGGIID (77 aa).

This sequence belongs to the CcmL/EutN family. CsoS4 subfamily. Homopentamer.

The protein resides in the carboxysome. In terms of biological role, probably forms vertices in the carboxysome. Has been modeled to induce curvature upon insertion into an otherwise flat hexagonal layer of major carboxysome subunits. A minor shell protein, only 12 pentamers of CsoS4A/CsoS4B are calculated to be present in each carboxysome. The 2 CsoS4 proteins contribute to the impermeability of the carboxysome to CO(2). Its central pore is probably too small to allow passage of metabolites; its function might be to anchor different proteins or metabolites to the carboxysome. Unlike beta-carboxysomes, alpha-carboxysomes (Cb) can form without cargo protein. CsoS2 is essential for Cb formation and is also capable of targeting foreign proteins to the Cb. The Cb shell assembles with the aid of CsoS2; CsoS1A, CsoS1B and CsoS1C form the majority of the shell while CsoS4A and CsoS4B form vertices. CsoS1D forms pseudohexamers that probably control metabolite flux into and out of the shell. The polypeptide is Carboxysome shell vertex protein CsoS4B (Halothiobacillus neapolitanus (strain ATCC 23641 / c2) (Thiobacillus neapolitanus)).